An 86-amino-acid polypeptide reads, in one-letter code: Cell division topological specificity factor (86 aa).

This sequence belongs to the MinE family.

Its function is as follows. Prevents the cell division inhibition by proteins MinC and MinD at internal division sites while permitting inhibition at polar sites. This ensures cell division at the proper site by restricting the formation of a division septum at the midpoint of the long axis of the cell. This Rhizobium johnstonii (strain DSM 114642 / LMG 32736 / 3841) (Rhizobium leguminosarum bv. viciae) protein is Cell division topological specificity factor.